We begin with the raw amino-acid sequence, 427 residues long: MGIPTSSVSEEQESSEGQDSGDICSEENQIVSSYASKVCFEIEQDYKNRQFLGPEGNVDVELIDKSTNTYSVRFPTAGWYLWPATGLGFLVRDVVTLTIGFGSWNQHLALDLQHHEQWLVGGPLFDITAEPEEAVAEIHLPHFISLQAGEVDVSWFLIAHFKNEGMVLEHPARVEPFYAVLEKPSFSLMGILLRIASGTRLSIPITSNTLIYYHPHPEDIKFHLYLVPSDALLTKMIDDEEDRFCGVRLQTSPPVEPLNFGARYIVSNSAHLEIIPTELKLSYRSPGEIQHFSKFYAGQMKEPIQLEITEKRHETLVWKTVVKPVDIQLGAASAPPAFSGAAFVKENHRQLQARMGDLKGVLDDLQDNEVLTENEKELVEQAKTRQSKNDTLLTMVEKKGDRALELLFRSISERDPYLVSYLRQQSL.

A disordered region spans residues 1–23 (MGIPTSSVSEEQESSEGQDSGDI). Residues 51–186 (FLGPEGNVDV…FYAVLEKPSF (136 aa)) are ZU5. The region spanning 51-336 (FLGPEGNVDV…IQLGAASAPP (286 aa)) is the FIIND domain. The segment at 187–336 (SLMGILLRIA…IQLGAASAPP (150 aa)) is UPA. Positions 336–426 (PAFSGAAFVK…YLVSYLRQQS (91 aa)) constitute a CARD domain.

As to quaternary structure, interacts with DPP9; leading to inhibit activation of the inflammasome. DPP9 acts via formation of a ternary complex, composed of a DPP9 homodimer, one full-length CARD8 protein, and one cleaved C-terminus of CARD8 (Caspase recruitment domain-containing protein 8, C-terminus). Interacts with DPP8; leading to inhibit activation of the inflammasome, probably via formation of a ternary complex with DPP8. Interacts with NLRP3. Interacts with IKBKG/NEMO. Interacts with DRAL. Binds to caspase-1 (CASP1), CARD16/pseudo-ICE and CARD18/ICEBERG. Interacts with NLRP2 (via NACHT domain). In terms of assembly, interacts with the C-terminal part of CARD8 (Caspase recruitment domain-containing protein 8, C-terminus) in absence of pathogens and other damage-associated signals. Interacts with the N-terminal part of CARD8 (Caspase recruitment domain-containing protein 8, N-terminus) in absence of pathogens and other damage-associated signals. Homomultimer; forms the CARD8 inflammasome polymeric complex, a filament composed of homopolymers of this form in response to pathogens and other damage-associated signals. The CARD8 inflammasome polymeric complex directly recruits pro-caspase-1 (proCASP1) independently of PYCARD/ASC. Interacts (via CARD domain) with CASP1 (via CARD domain); leading to CASP1 activation. Undergoes autocatalytic processing within the FIIND domain to generate the N-terminal and C-terminal parts, which are associated non-covalently in absence of pathogens and other damage-associated signals. In terms of processing, ubiquitinated by the N-end rule pathway in response to pathogens and other damage-associated signals, leading to its degradation by the proteasome and subsequent release of the cleaved C-terminal part of the protein (Caspase recruitment domain-containing protein 8, C-terminus), which polymerizes and forms the CARD8 inflammasome.

The protein localises to the cytoplasm. Its subcellular location is the nucleus. It localises to the inflammasome. Its activity is regulated as follows. CARD8 inflammasome is inhibited by DPP8 and DPP9, which sequester the C-terminal fragment of CARD8 (Caspase recruitment domain-containing protein 8, C-terminus) in a ternary complex, thereby preventing CARD8 oligomerization and activation. CARD8 inflammasome is activated by Val-boroPro (Talabostat, PT-100), an inhibitor of dipeptidyl peptidases DPP8 and DPP9. Val-boroPro relieves inhibition of DPP8 and/or DPP9 by inducing the proteasome-mediated destruction of the N-terminal part of CARD8, releasing its C-terminal part from autoinhibition. Functionally, inflammasome sensor, which mediates inflammasome activation in response to various pathogen-associated signals, leading to subsequent pyroptosis of CD4(+) T-cells and macrophages. Inflammasomes are supramolecular complexes that assemble in the cytosol in response to pathogens and other damage-associated signals and play critical roles in innate immunity and inflammation. Acts as a recognition receptor (PRR): recognizes specific pathogens and other damage-associated signals, such as Val-boroPro inhibitor, and mediates CARD8 inflammasome activation. In response to pathogen-associated signals, the N-terminal part of CARD8 is degraded by the proteasome, releasing the cleaved C-terminal part of the protein (Caspase recruitment domain-containing protein 8, C-terminus), which polymerizes to initiate the formation of the inflammasome complex: the CARD8 inflammasome directly recruits pro-caspase-1 (proCASP1) independently of PYCARD/ASC and promotes caspase-1 (CASP1) activation, which subsequently cleaves and activates inflammatory cytokines IL1B and IL18 and gasdermin-D (GSDMD), leading to pyroptosis. Also acts as a negative regulator of the NLRP3 inflammasome. May also act as an inhibitor of NF-kappa-B activation. In terms of biological role, constitutes the precursor of the CARD8 inflammasome, which mediates autoproteolytic processing within the FIIND domain to generate the N-terminal and C-terminal parts, which are associated non-covalently in absence of pathogens and other damage-associated signals. Its function is as follows. Regulatory part that prevents formation of the CARD8 inflammasome: in absence of pathogens and other damage-associated signals, interacts with the C-terminal part of CARD8 (Caspase recruitment domain-containing protein 8, C-terminus), preventing activation of the CARD8 inflammasome. In response to pathogen-associated signals, this part is ubiquitinated by the N-end rule pathway and degraded by the proteasome, releasing the cleaved C-terminal part of the protein, which polymerizes and forms the CARD8 inflammasome. Constitutes the active part of the CARD8 inflammasome. In absence of pathogens and other damage-associated signals, interacts with the N-terminal part of CARD8 (Caspase recruitment domain-containing protein 8, N-terminus), preventing activation of the CARD8 inflammasome. In response to pathogen-associated signals, the N-terminal part of CARD8 is degraded by the proteasome, releasing this form, which polymerizes to form the CARD8 inflammasome complex: the CARD8 inflammasome complex then directly recruits pro-caspase-1 (proCASP1) and promotes caspase-1 (CASP1) activation, leading to gasdermin-D (GSDMD) cleavage and subsequent pyroptosis. The chain is Caspase recruitment domain-containing protein 8 from Pongo abelii (Sumatran orangutan).